A 112-amino-acid polypeptide reads, in one-letter code: Gastrula zinc finger protein XlCGF9.1 (112 aa).

4 consecutive C2H2-type zinc fingers follow at residues 6–28, 34–56, 62–84, and 90–112; these read FICS…MKIH, FCCP…ERTH, FTCP…RIIH, and YSCP…FKIH.

It belongs to the krueppel C2H2-type zinc-finger protein family.

Its subcellular location is the nucleus. May be involved in transcriptional regulation. The polypeptide is Gastrula zinc finger protein XlCGF9.1 (Xenopus laevis (African clawed frog)).